Here is a 279-residue protein sequence, read N- to C-terminus: Large ribosomal subunit protein uL2 (279 aa).

A disordered region spans residues 224–279; it reads AMNPIDHPHGGGEGRTSGGRHPVTPWGKGTKGNRTRKSKASDKLIVRSRHAKKKGR. Positions 269–279 are enriched in basic residues; sequence VRSRHAKKKGR.

The protein belongs to the universal ribosomal protein uL2 family. As to quaternary structure, part of the 50S ribosomal subunit. Forms a bridge to the 30S subunit in the 70S ribosome.

One of the primary rRNA binding proteins. Required for association of the 30S and 50S subunits to form the 70S ribosome, for tRNA binding and peptide bond formation. It has been suggested to have peptidyltransferase activity; this is somewhat controversial. Makes several contacts with the 16S rRNA in the 70S ribosome. In Cereibacter sphaeroides (strain ATCC 17025 / ATH 2.4.3) (Rhodobacter sphaeroides), this protein is Large ribosomal subunit protein uL2.